Here is a 325-residue protein sequence, read N- to C-terminus: Casein kinase I isoform alpha (325 aa).

Ala2 is subject to N-acetylalanine. The residue at position 4 (Ser4) is a Phosphoserine. Lys8 carries the N6-acetyllysine modification. The region spanning Tyr17–Phe285 is the Protein kinase domain. ATP is bound by residues Ile23–Ile31 and Lys46. Asp136 functions as the Proton acceptor in the catalytic mechanism.

The protein belongs to the protein kinase superfamily. CK1 Ser/Thr protein kinase family. Casein kinase I subfamily. As to quaternary structure, interacts with the Axin complex. Interacts with TUT1, leading to TUT1 phosphorylation. Interacts with FAM83A, FAM83B, FAM83C, FAM83D, FAM83E, FAM83F, FAM83G and FAM83H (via DUF1669). Interaction with FAM83H recruits CSNK1A1 to keratin filaments. Post-translationally, phosphorylated by MTOR in response to mitogenic stimulation, leading to its activation.

It is found in the cytoplasm. The protein localises to the cytoskeleton. It localises to the microtubule organizing center. Its subcellular location is the centrosome. The protein resides in the chromosome. It is found in the centromere. The protein localises to the kinetochore. It localises to the nucleus speckle. Its subcellular location is the cilium basal body. The protein resides in the spindle. The enzyme catalyses L-seryl-[protein] + ATP = O-phospho-L-seryl-[protein] + ADP + H(+). It carries out the reaction L-threonyl-[protein] + ATP = O-phospho-L-threonyl-[protein] + ADP + H(+). In terms of biological role, casein kinases are operationally defined by their preferential utilization of acidic proteins such as caseins as substrates. Can phosphorylate a large number of proteins. Participates in Wnt signaling. Phosphorylates CTNNB1 at 'Ser-45'. May phosphorylate PER1 and PER2. May play a role in segregating chromosomes during mitosis. May play a role in keratin cytoskeleton disassembly and thereby, it may regulate epithelial cell migration. Acts as a positive regulator of mTORC1 and mTORC2 signaling in response to nutrients by mediating phosphorylation of DEPTOR inhibitor. Acts as an inhibitor of NLRP3 inflammasome assembly by mediating phosphorylation of NLRP3. The chain is Casein kinase I isoform alpha (CSNK1A1) from Oryctolagus cuniculus (Rabbit).